Consider the following 269-residue polypeptide: Aegyptin-like protein (269 aa).

A signal peptide spans 1 to 19 (MKLLLLLASVLCLALIVSA). The disordered stretch occupies residues 19–152 (ARPSDETTDQ…GGAEGGEESP (134 aa)). Positions 38-148 (TSDSYHQEED…AGEEGGAEGG (111 aa)) are GE-rich region which mediates binding of Ca(2+). 3 stretches are compositionally biased toward acidic residues: residues 56–73 (GTEDGNSEDDSSELESSS), 98–121 (GEEDEAGEEGEAGEEGEAGEEGGA), and 131–149 (GGADEEGSAGEEGGAEGGE). Positions 148 to 269 (GEESPVNTYH…DCIVEKRDSE (122 aa)) are mediates binding of host collagen and inhibition of platelet aggregation. 2 disulfides stabilise this stretch: C208-C261 and C230-C239.

It belongs to the aegyptin family. In terms of tissue distribution, female saliva (at protein level). Distal lateral lobes of female salivary gland (at protein level). Low-level expression in male salivary gland. Not detected in female and male carcasses.

Its subcellular location is the secreted. Functionally, modulates blood feeding of female mosquitoes on vertebrate hosts. Inhibits collagen-induced platelet aggregation in the host via preventing collagen interaction with its ligands: glycoprotein VI and integrin alpha-2/beta-1 (ITGA2/ITGB1). Inhibits collagen-induced increase of Ca(2+) levels in host platelets. Binds to host collagens. Binds Ca(2+). Prevents a decrease in platelet count in the host blood after collagen injection. (Microbial infection) Does not affect the development of Plasmodium berghei parasites in mosquitoes. The chain is Aegyptin-like protein from Anopheles stephensi (Indo-Pakistan malaria mosquito).